A 596-amino-acid chain; its full sequence is Signal peptide peptidase-like 2B (596 aa).

An N-terminal signal peptide occupies residues 1–21 (MAARWAQFLLFSLLSLPQVYC). Residues 22-170 (EYGMVHVLSE…APNEPVLDYN (149 aa)) are Lumenal-facing. Residues 53-147 (HDLGKASLLQ…LLSYSDMLDI (95 aa)) form the PA domain. Asparagine 93 carries an N-linked (GlcNAc...) asparagine glycan. Residues 171-191 (MVIIFVMAVGTVAIGGYWAGS) traverse the membrane as a helical segment. Topologically, residues 192–219 (RDVKERYMKHKRDDGAEKHEDETVDVTP) are cytoplasmic. Residues 220–240 (IMICVFVVMCCSMLVLLYFFY) form a helical membrane-spanning segment. The Lumenal segment spans residues 241–242 (DH). The helical transmembrane segment at 243–263 (LVYVIIGIFCLAASIGLYSCL) threads the bilayer. Topologically, residues 264–289 (SPFVRRFPLGKCRIPDNNLPYFHKRP) are cytoplasmic. The helical transmembrane segment at 290 to 310 (QVRILLLAVFCISVSVVWGVF) threads the bilayer. Topologically, residues 311 to 315 (RNEDQ) are lumenal. A helical transmembrane segment spans residues 316-336 (WAWVLQDALGIAFCLYMLKTI). The Cytoplasmic portion of the chain corresponds to 337–344 (RLPTFKGC). Residues 345 to 365 (TLLLLVLFVYDVFFVFITPFL) form a helical membrane-spanning segment. Aspartate 355 is an active-site residue. Over 366–408 (TKTGESIMVEVAAGPSDSATHEKLPMVLKVPRLNSSPLALCDR) the chain is Lumenal. Residues 409 to 429 (PFSLLGFGDILVPGLLVAYCH) traverse the membrane as a helical segment. Residue aspartate 417 is part of the active site. Residues 430–441 (RFDIQVQSSRVY) lie on the Cytoplasmic side of the membrane. Residues 442–462 (FVACTIAYGIGLLVTFVALAL) traverse the membrane as a helical segment. Topologically, residues 463–466 (MQMG) are lumenal. Residues 467–487 (QPALLYLVPCTLITSFSVALW) traverse the membrane as a helical segment. The short motif at 468–470 (PAL) is the PAL element. Residues 488–596 (RKELAMFWTG…SLNLEQKQLE (109 aa)) lie on the Cytoplasmic side of the membrane. A disordered region spans residues 543-596 (KELHSPTLAAEEPADNDTKTEQSEVSIAQSEEAAGHNKDDLESKSLNLEQKQLE). Residues 575–585 (AAGHNKDDLES) are compositionally biased toward basic and acidic residues. Residues 586–596 (KSLNLEQKQLE) show a composition bias toward polar residues.

The protein belongs to the peptidase A22B family.

The protein resides in the cell membrane. Its subcellular location is the golgi apparatus membrane. The protein localises to the lysosome membrane. It localises to the endosome membrane. It is found in the membrane. Functionally, intramembrane-cleaving aspartic protease (I-CLiP) that cleaves type II membrane signal peptides in the hydrophobic plane of the membrane. The chain is Signal peptide peptidase-like 2B from Gallus gallus (Chicken).